A 347-amino-acid polypeptide reads, in one-letter code: GMP reductase (347 aa).

108–131 (ADFVKMQQILALSPGLKFICIDVA) contributes to the NADP(+) binding site. K(+) contacts are provided by Gly-181 and Gly-183. Residue Cys-186 is the Thioimidate intermediate of the active site. 216–239 (IVSDGGCSVPGDVAKAFGGGADFV) lines the NADP(+) pocket.

The protein belongs to the IMPDH/GMPR family. GuaC type 1 subfamily. Homotetramer.

It catalyses the reaction IMP + NH4(+) + NADP(+) = GMP + NADPH + 2 H(+). Catalyzes the irreversible NADPH-dependent deamination of GMP to IMP. It functions in the conversion of nucleobase, nucleoside and nucleotide derivatives of G to A nucleotides, and in maintaining the intracellular balance of A and G nucleotides. The chain is GMP reductase from Serratia proteamaculans (strain 568).